Here is a 248-residue protein sequence, read N- to C-terminus: Large ribosomal subunit protein uL30B (248 aa).

A disordered region spans residues 1–45; that stretch reads MSQKKQKIQVEQKVPENVAKKTQRDSKLRDAVAKRRTERLAANKT. Positions 8 to 41 are enriched in basic and acidic residues; that stretch reads IQVEQKVPENVAKKTQRDSKLRDAVAKRRTERLA.

It belongs to the universal ribosomal protein uL30 family.

In terms of biological role, binds to G-rich structures in 28S rRNA and in mRNAs. Plays a regulatory role in the translation apparatus; inhibits cell-free translation of mRNAs. The polypeptide is Large ribosomal subunit protein uL30B (Rpl7-2) (Paramecium tetraurelia).